Reading from the N-terminus, the 276-residue chain is Rhamnulose-1-phosphate aldolase (276 aa).

Glutamate 117 is a catalytic residue. Histidine 141, histidine 143, and histidine 212 together coordinate Zn(2+).

This sequence belongs to the aldolase class II family. RhaD subfamily. In terms of assembly, homotetramer. It depends on Zn(2+) as a cofactor.

It localises to the cytoplasm. It catalyses the reaction L-rhamnulose 1-phosphate = (S)-lactaldehyde + dihydroxyacetone phosphate. Its pathway is carbohydrate degradation; L-rhamnose degradation; glycerone phosphate from L-rhamnose: step 3/3. In terms of biological role, catalyzes the reversible cleavage of L-rhamnulose-1-phosphate to dihydroxyacetone phosphate (DHAP) and L-lactaldehyde. This is Rhamnulose-1-phosphate aldolase from Klebsiella pneumoniae subsp. pneumoniae (strain ATCC 700721 / MGH 78578).